The sequence spans 159 residues: Transcription antitermination protein NusB (159 aa).

This sequence belongs to the NusB family.

Its function is as follows. Involved in transcription antitermination. Required for transcription of ribosomal RNA (rRNA) genes. Binds specifically to the boxA antiterminator sequence of the ribosomal RNA (rrn) operons. The chain is Transcription antitermination protein NusB from Xanthomonas axonopodis pv. citri (strain 306).